A 468-amino-acid chain; its full sequence is Cysteine--tRNA ligase (468 aa).

Cys27 contacts Zn(2+). Residues 29-39 carry the 'HIGH' region motif; that stretch reads PTVYNYFHIGN. Zn(2+) contacts are provided by Cys207, His232, and Glu236. The 'KMSKS' region signature appears at 264 to 268; that stretch reads KMAKS. Residue Lys267 participates in ATP binding.

The protein belongs to the class-I aminoacyl-tRNA synthetase family. As to quaternary structure, monomer. Zn(2+) is required as a cofactor.

It is found in the cytoplasm. The catalysed reaction is tRNA(Cys) + L-cysteine + ATP = L-cysteinyl-tRNA(Cys) + AMP + diphosphate. The sequence is that of Cysteine--tRNA ligase from Acetivibrio thermocellus (strain ATCC 27405 / DSM 1237 / JCM 9322 / NBRC 103400 / NCIMB 10682 / NRRL B-4536 / VPI 7372) (Clostridium thermocellum).